The primary structure comprises 412 residues: [Pyruvate dehydrogenase (acetyl-transferring)] kinase isozyme 4, mitochondrial (412 aa).

The Histidine kinase domain maps to 138-368 (ILEYKDNCTV…DAIIYLKALS (231 aa)). ATP is bound by residues 254 to 261 (ELFKNAMR), aspartate 293, 312 to 313 (ST), and 329 to 334 (GFGYGL).

The protein belongs to the PDK/BCKDK protein kinase family. Homodimer. Interacts with the pyruvate dehydrogenase complex subunit DLAT, and is part of the multimeric pyruvate dehydrogenase complex that contains multiple copies of pyruvate dehydrogenase (E1), dihydrolipoamide acetyltransferase (DLAT, E2) and lipoamide dehydrogenase (DLD, E3). In terms of tissue distribution, ubiquitous; highest levels of expression in heart and skeletal muscle.

It localises to the mitochondrion matrix. The enzyme catalyses L-seryl-[pyruvate dehydrogenase E1 alpha subunit] + ATP = O-phospho-L-seryl-[pyruvate dehydrogenase E1 alpha subunit] + ADP + H(+). Kinase that plays a key role in regulation of glucose and fatty acid metabolism and homeostasis via phosphorylation of the pyruvate dehydrogenase subunits PDHA1 and PDHA2. This inhibits pyruvate dehydrogenase activity, and thereby regulates metabolite flux through the tricarboxylic acid cycle, down-regulates aerobic respiration and inhibits the formation of acetyl-coenzyme A from pyruvate. Inhibition of pyruvate dehydrogenase decreases glucose utilization and increases fat metabolism in response to prolonged fasting and starvation. Plays an important role in maintaining normal blood glucose levels under starvation, and is involved in the insulin signaling cascade. Via its regulation of pyruvate dehydrogenase activity, plays an important role in maintaining normal blood pH and in preventing the accumulation of ketone bodies under starvation. In the fed state, mediates cellular responses to glucose levels and to a high-fat diet. Regulates both fatty acid oxidation and de novo fatty acid biosynthesis. Plays a role in the generation of reactive oxygen species. Protects detached epithelial cells against anoikis. Plays a role in cell proliferation via its role in regulating carbohydrate and fatty acid metabolism. The polypeptide is [Pyruvate dehydrogenase (acetyl-transferring)] kinase isozyme 4, mitochondrial (Pdk4) (Rattus norvegicus (Rat)).